A 316-amino-acid chain; its full sequence is Putative ring-cleaving dioxygenase MhqA (316 aa).

VOC domains follow at residues 5–131 (GIHH…LTAD) and 154–278 (GLGP…LSTD). Fe cation contacts are provided by histidine 8, histidine 226, and glutamate 274.

It belongs to the extradiol ring-cleavage dioxygenase family. Fe(2+) serves as cofactor.

It localises to the cytoplasm. In terms of biological role, putative ring-cleavage dioxygenase that may contribute to the degradation of aromatic compounds. The polypeptide is Putative ring-cleaving dioxygenase MhqA (mhqA) (Bacillus subtilis (strain 168)).